Here is a 360-residue protein sequence, read N- to C-terminus: Chorismate synthase (360 aa).

2 residues coordinate NADP(+): Arg48 and Arg54. FMN-binding positions include 125 to 127 (RSS), 246 to 247 (NA), Gly286, 301 to 305 (KPTSS), and Arg327.

Belongs to the chorismate synthase family. Homotetramer. FMNH2 serves as cofactor.

It carries out the reaction 5-O-(1-carboxyvinyl)-3-phosphoshikimate = chorismate + phosphate. Its pathway is metabolic intermediate biosynthesis; chorismate biosynthesis; chorismate from D-erythrose 4-phosphate and phosphoenolpyruvate: step 7/7. Functionally, catalyzes the anti-1,4-elimination of the C-3 phosphate and the C-6 proR hydrogen from 5-enolpyruvylshikimate-3-phosphate (EPSP) to yield chorismate, which is the branch point compound that serves as the starting substrate for the three terminal pathways of aromatic amino acid biosynthesis. This reaction introduces a second double bond into the aromatic ring system. This is Chorismate synthase from Actinobacillus pleuropneumoniae serotype 7 (strain AP76).